A 910-amino-acid chain; its full sequence is Protein translocase subunit SecA (910 aa).

Residues Gln-89, 107-111 (GEGKT), and Asp-496 each bind ATP. The segment at 873–910 (QEFSGGNLNRSQSNGSSVTVTTSSGGGTERKTSRRRKR) is disordered. A compositionally biased stretch (polar residues) spans 876–886 (SGGNLNRSQSN).

The protein belongs to the SecA family. As to quaternary structure, monomer and homodimer. Part of the essential Sec protein translocation apparatus which comprises SecA, SecYEG and auxiliary proteins SecDF. Other proteins may also be involved.

The protein resides in the cell inner membrane. The protein localises to the cytoplasm. The enzyme catalyses ATP + H2O + cellular proteinSide 1 = ADP + phosphate + cellular proteinSide 2.. In terms of biological role, part of the Sec protein translocase complex. Interacts with the SecYEG preprotein conducting channel. Has a central role in coupling the hydrolysis of ATP to the transfer of proteins into and across the cell membrane, serving as an ATP-driven molecular motor driving the stepwise translocation of polypeptide chains across the membrane. This chain is Protein translocase subunit SecA, found in Leptospira interrogans serogroup Icterohaemorrhagiae serovar copenhageni (strain Fiocruz L1-130).